The primary structure comprises 238 residues: NAD(P)H-quinone oxidoreductase subunit K 1 (238 aa).

Residues cysteine 54, cysteine 55, cysteine 119, and cysteine 150 each contribute to the [4Fe-4S] cluster site.

The protein belongs to the complex I 20 kDa subunit family. In terms of assembly, NDH-1 can be composed of about 15 different subunits; different subcomplexes with different compositions have been identified which probably have different functions. The cofactor is [4Fe-4S] cluster.

It is found in the cellular thylakoid membrane. It catalyses the reaction a plastoquinone + NADH + (n+1) H(+)(in) = a plastoquinol + NAD(+) + n H(+)(out). The catalysed reaction is a plastoquinone + NADPH + (n+1) H(+)(in) = a plastoquinol + NADP(+) + n H(+)(out). In terms of biological role, NDH-1 shuttles electrons from an unknown electron donor, via FMN and iron-sulfur (Fe-S) centers, to quinones in the respiratory and/or the photosynthetic chain. The immediate electron acceptor for the enzyme in this species is believed to be plastoquinone. Couples the redox reaction to proton translocation, and thus conserves the redox energy in a proton gradient. Cyanobacterial NDH-1 also plays a role in inorganic carbon-concentration. The sequence is that of NAD(P)H-quinone oxidoreductase subunit K 1 from Cyanothece sp. (strain PCC 7425 / ATCC 29141).